Consider the following 68-residue polypeptide: UPF0435 protein Sca_1453 (68 aa).

The protein belongs to the UPF0435 family.

In Staphylococcus carnosus (strain TM300), this protein is UPF0435 protein Sca_1453.